A 426-amino-acid polypeptide reads, in one-letter code: MDLNDLLLQQQEVTNLLSNLQEAHKRILISNEDENNDLNKIRKDILICLNDLKTVNSLIIDPRDGLIKKNLHKLEKYEQELRSLESEEAAIESNLNQWKIDQDPENVRRKENWGTVPINLVGNHQYLLESYVNEVGIENTTLANTNGNHEETPNSSKFTREQLLRNARKLKLCQEQVNSEIDQLKSLISQYERDRNVINDEYNRTTELIQKEVNTLSREEDKINSQREKILKKLGLLKDHEQNQPRNFFFSLGALARVDNSDFKIALSQAYEFIDAKKQALKKILHENKSQTMSLEHNFSIWNDVIRSIQGLETNLQQSFIEKEGNVPKTDITSMISRTLSRVNSIVGTYSKDSIFTSILCELKALQKALDELNGKMQPIPIKSSAKTPELLQMGKSPPKVALSKEYASNLHESTEDFPLKINKTD.

Coiled-coil stretches lie at residues 64–101 and 165–230; these read DGLIKKNLHKLEKYEQELRSLESEEAAIESNLNQWKID and RNAR…REKI.

This sequence belongs to the ATG23 family.

The protein localises to the cytoplasm. The protein resides in the membrane. Functionally, required for cytoplasm to vacuole transport (Cvt) vesicle formation and efficient autophagy. Plays a role in ATG protein retrieval from the pre-autophagosomal structure (PAS) and is especially required for autophagy-dependent cycling of ATG9. Also plays a role in regulation of filamentous growth. The sequence is that of Autophagy-related protein 23 (ATG23) from Kluyveromyces lactis (strain ATCC 8585 / CBS 2359 / DSM 70799 / NBRC 1267 / NRRL Y-1140 / WM37) (Yeast).